The sequence spans 465 residues: MKPPILVFIVYLLQLRDCQCAPTGKDRTSIREDPKGFSKAGEIDVDEEVKKALIGMKQMKILMERREEEHSKLMRTLKKCREEKQEALKLMNEVQEHLEEEERLCQVSLMDSWDECKSCLESDCMRFYTTCQSSWSSMKSTIERVFRKIYQFLFPFHEDDEKELPVGEKFTEEDVQLMQIENVFSQLTVDVGFLYNMSFHVFKQMQQEFDLAFQSYFMSDTDSMEPYFFPAFSKEPAKKAHPMQSWDIPSFFQLFCNFSLSVYQSVSATVTEMLKATEDLSKQDKDSAHGGPSSTTWPVRGRGLCGEPGQNSSECLQFHARCQKCQDYLWADCPAVPELYTKADEALELVNISNQQYAQVLQMTQHHLEDTTYLMEKMREQFGWVTELASQTPGSENIFSFIKVVPGVHEGNFSKQDEKMIDISILPSSNFTLTIPLEESAESSDFISYMLAKAVQHFKEHFKSW.

An N-terminal signal peptide occupies residues Met1–Cys20. Residues Leu62–Val107 adopt a coiled-coil conformation. 5 disulfides stabilise this stretch: Cys105–Cys333, Cys116–Cys325, Cys119–Cys322, Cys124–Cys315, and Cys131–Cys305. 2 N-linked (GlcNAc...) asparagine glycosylation sites follow: Asn196 and Asn257. The disordered stretch occupies residues Leu280 to Arg300. Asn311, Asn351, Asn412, and Asn430 each carry an N-linked (GlcNAc...) asparagine glycan.

The protein belongs to the clusterin family.

Its subcellular location is the secreted. In Bos taurus (Bovine), this protein is Clusterin-like protein 1.